The sequence spans 207 residues: dITP/XTP pyrophosphatase (207 aa).

10-15 (TRNAGK) provides a ligand contact to substrate. Residues glutamate 43 and aspartate 72 each coordinate Mg(2+). Residue aspartate 72 is the Proton acceptor of the active site. Residues serine 73, 161 to 164 (FGYD), lysine 184, and 189 to 190 (HR) contribute to the substrate site.

It belongs to the HAM1 NTPase family. As to quaternary structure, homodimer. It depends on Mg(2+) as a cofactor.

It catalyses the reaction XTP + H2O = XMP + diphosphate + H(+). The enzyme catalyses dITP + H2O = dIMP + diphosphate + H(+). The catalysed reaction is ITP + H2O = IMP + diphosphate + H(+). Pyrophosphatase that catalyzes the hydrolysis of nucleoside triphosphates to their monophosphate derivatives, with a high preference for the non-canonical purine nucleotides XTP (xanthosine triphosphate), dITP (deoxyinosine triphosphate) and ITP. Seems to function as a house-cleaning enzyme that removes non-canonical purine nucleotides from the nucleotide pool, thus preventing their incorporation into DNA/RNA and avoiding chromosomal lesions. In Nitratidesulfovibrio vulgaris (strain ATCC 29579 / DSM 644 / CCUG 34227 / NCIMB 8303 / VKM B-1760 / Hildenborough) (Desulfovibrio vulgaris), this protein is dITP/XTP pyrophosphatase.